Reading from the N-terminus, the 514-residue chain is NAD(P)H-quinone oxidoreductase subunit 2 (514 aa).

14 helical membrane-spanning segments follow: residues 16–36 (IWPEGIIIITLMVILIGDLIV), 43–63 (WLPYVAIAGLLAAVVALYFEW), 80–100 (LSIVFRAIVALSTTVTILMSV), 110–130 (LAEFIAIMLTATLGGMFLSGA), 133–153 (LVMIFISLEMLSISSYLMTGY), 168–188 (LLIGASSSAIFLYGVSLLYGL), 211–231 (LGLAIALVFVIAGIAFKISAV), 245–265 (PTPVVAFLSVGSKAAGFALAI), 279–299 (WHFIFTALAILSMVLGNVVAL), 307–327 (MLAYSSIGQAGFVMIGLTANS), 335–355 (IFYLLIYLFMNLGAFICIILF), 379–399 (LGLSICLLSLGGIPPLAGFFG), 411–431 (GLYGLVLLGLVTSVISIYYYI), and 467–487 (VGLVLSVIATSLAGILSNPLF).

Belongs to the complex I subunit 2 family. NDH-1 can be composed of about 15 different subunits; different subcomplexes with different compositions have been identified which probably have different functions.

Its subcellular location is the cellular thylakoid membrane. The enzyme catalyses a plastoquinone + NADH + (n+1) H(+)(in) = a plastoquinol + NAD(+) + n H(+)(out). It carries out the reaction a plastoquinone + NADPH + (n+1) H(+)(in) = a plastoquinol + NADP(+) + n H(+)(out). In terms of biological role, NDH-1 shuttles electrons from an unknown electron donor, via FMN and iron-sulfur (Fe-S) centers, to quinones in the respiratory and/or the photosynthetic chain. The immediate electron acceptor for the enzyme in this species is believed to be plastoquinone. Couples the redox reaction to proton translocation, and thus conserves the redox energy in a proton gradient. Cyanobacterial NDH-1 also plays a role in inorganic carbon-concentration. The sequence is that of NAD(P)H-quinone oxidoreductase subunit 2 from Gloeothece citriformis (strain PCC 7424) (Cyanothece sp. (strain PCC 7424)).